Here is a 367-residue protein sequence, read N- to C-terminus: MSDSPVLPRAHGAAVLTAAMRSVAEDFQVDELPAFDASGEGEHLLLSVRKRGQNTAYVAKRLAQWAGIAEMGIGYAGLKDRHAVTTQRFSVHLPKRIAPDLSALDDDDMQVVEHTWHNRKLQRGALHGNRFVLTLREVVGDQTAIDARLHAIAARGIPNWFGEQRFGRDGGNVAAALAMFGYTRQLDGTLAPAPKRRLRNDQRSLLLSAARSALFNQVLTARVEQGDWDAPLDGEAWMLDGSRSVFGPEPWSEVLAERLARFDIHPSGPLWGAGELRCSADAAAIEQAALSDPQSLALRTGLEAAGLKQERRALRLRPQALAHAWLDAQTLQLTFALPPGCYATAVLWELGDVVDAARVAPQSRSEG.

Residue D80 is the Nucleophile of the active site. The TRUD domain maps to 156 to 316 (GIPNWFGEQR…LKQERRALRL (161 aa)).

It belongs to the pseudouridine synthase TruD family.

It carries out the reaction uridine(13) in tRNA = pseudouridine(13) in tRNA. Responsible for synthesis of pseudouridine from uracil-13 in transfer RNAs. This is tRNA pseudouridine synthase D from Xanthomonas campestris pv. campestris (strain B100).